Here is a 127-residue protein sequence, read N- to C-terminus: Small ribosomal subunit protein uS12 (127 aa).

Residues 1–28 (MPTIQQLIRDERSKAKRKTKSPALKQCP) are disordered. 3-methylthioaspartic acid is present on Asp-89. Residues 104 to 127 (ATGVKNRQKARSKYGTKRPKPAAK) form a disordered region. Basic residues predominate over residues 109 to 127 (NRQKARSKYGTKRPKPAAK).

It belongs to the universal ribosomal protein uS12 family. In terms of assembly, part of the 30S ribosomal subunit. Contacts proteins S8 and S17. May interact with IF1 in the 30S initiation complex.

Its function is as follows. With S4 and S5 plays an important role in translational accuracy. In terms of biological role, interacts with and stabilizes bases of the 16S rRNA that are involved in tRNA selection in the A site and with the mRNA backbone. Located at the interface of the 30S and 50S subunits, it traverses the body of the 30S subunit contacting proteins on the other side and probably holding the rRNA structure together. The combined cluster of proteins S8, S12 and S17 appears to hold together the shoulder and platform of the 30S subunit. The sequence is that of Small ribosomal subunit protein uS12 from Microcystis aeruginosa (strain NIES-843 / IAM M-2473).